Here is a 1209-residue protein sequence, read N- to C-terminus: DNA-directed RNA polymerase subunit beta'' (1209 aa).

Residues Cys-233, Cys-308, Cys-315, and Cys-318 each coordinate Zn(2+).

Belongs to the RNA polymerase beta' chain family. RpoC2 subfamily. In plastids the minimal PEP RNA polymerase catalytic core is composed of four subunits: alpha, beta, beta', and beta''. When a (nuclear-encoded) sigma factor is associated with the core the holoenzyme is formed, which can initiate transcription. It depends on Zn(2+) as a cofactor.

The protein localises to the plastid. It localises to the chloroplast. The enzyme catalyses RNA(n) + a ribonucleoside 5'-triphosphate = RNA(n+1) + diphosphate. Its function is as follows. DNA-dependent RNA polymerase catalyzes the transcription of DNA into RNA using the four ribonucleoside triphosphates as substrates. The protein is DNA-directed RNA polymerase subunit beta'' of Pinus koraiensis (Korean pine).